A 157-amino-acid polypeptide reads, in one-letter code: MSGEFRYIVRVAGVDLPGDKALVYALADIKGIGVSTAQAVAKKLGLDPYRLLGTLSEEEVEKLSAALREIEKLGLPPWMLNRRKDPFLGVDRHLITSDLLITVRNDIEFMKKIKSYKGVRHMLGLKVRGQRTRTTGRTGLTVGVKRGKEKAQQQKGG.

This sequence belongs to the universal ribosomal protein uS13 family. Part of the 30S ribosomal subunit. Forms a loose heterodimer with protein S19. Forms two bridges to the 50S subunit in the 70S ribosome.

In terms of biological role, located at the top of the head of the 30S subunit, it contacts several helices of the 16S rRNA. In the 70S ribosome it contacts the 23S rRNA (bridge B1a) and protein L5 of the 50S subunit (bridge B1b), connecting the 2 subunits; these bridges are implicated in subunit movement. This Thermofilum pendens (strain DSM 2475 / Hrk 5) protein is Small ribosomal subunit protein uS13.